We begin with the raw amino-acid sequence, 475 residues long: Ribulose bisphosphate carboxylase large chain (475 aa).

Substrate contacts are provided by Asn-123 and Thr-173. Lys-175 acts as the Proton acceptor in catalysis. Residue Lys-177 participates in substrate binding. Positions 201, 203, and 204 each coordinate Mg(2+). Lys-201 is subject to N6-carboxylysine. Catalysis depends on His-294, which acts as the Proton acceptor. Arg-295, His-327, and Ser-379 together coordinate substrate.

It belongs to the RuBisCO large chain family. Type I subfamily. As to quaternary structure, heterohexadecamer of 8 large chains and 8 small chains; disulfide-linked. The disulfide link is formed within the large subunit homodimers. Mg(2+) serves as cofactor. In terms of processing, the disulfide bond which can form in the large chain dimeric partners within the hexadecamer appears to be associated with oxidative stress and protein turnover.

The protein resides in the plastid. Its subcellular location is the chloroplast. The enzyme catalyses 2 (2R)-3-phosphoglycerate + 2 H(+) = D-ribulose 1,5-bisphosphate + CO2 + H2O. It carries out the reaction D-ribulose 1,5-bisphosphate + O2 = 2-phosphoglycolate + (2R)-3-phosphoglycerate + 2 H(+). Its function is as follows. RuBisCO catalyzes two reactions: the carboxylation of D-ribulose 1,5-bisphosphate, the primary event in carbon dioxide fixation, as well as the oxidative fragmentation of the pentose substrate in the photorespiration process. Both reactions occur simultaneously and in competition at the same active site. This is Ribulose bisphosphate carboxylase large chain from Euglena gracilis.